The primary structure comprises 648 residues: Beta-glucuronidase (648 aa).

An N-terminal signal peptide occupies residues 1-19 (GLAMAWAVLGPLLWGCALA). N170, N269, and N417 each carry an N-linked (GlcNAc...) asparagine glycan. E448 serves as the catalytic Proton donor. A glycan (N-linked (GlcNAc...) asparagine) is linked at N628.

The protein belongs to the glycosyl hydrolase 2 family. In terms of assembly, homotetramer.

The protein localises to the lysosome. The catalysed reaction is a beta-D-glucuronoside + H2O = D-glucuronate + an alcohol. With respect to regulation, inhibited by L-aspartic acid. Its function is as follows. Plays an important role in the degradation of dermatan and keratan sulfates. In Chlorocebus aethiops (Green monkey), this protein is Beta-glucuronidase (GUSB).